A 393-amino-acid polypeptide reads, in one-letter code: NADH-quinone oxidoreductase subunit D (393 aa).

It belongs to the complex I 49 kDa subunit family. In terms of assembly, NDH-1 is composed of 14 different subunits. Subunits NuoB, C, D, E, F, and G constitute the peripheral sector of the complex.

The protein resides in the cell inner membrane. The catalysed reaction is a quinone + NADH + 5 H(+)(in) = a quinol + NAD(+) + 4 H(+)(out). Functionally, NDH-1 shuttles electrons from NADH, via FMN and iron-sulfur (Fe-S) centers, to quinones in the respiratory chain. The immediate electron acceptor for the enzyme in this species is believed to be ubiquinone. Couples the redox reaction to proton translocation (for every two electrons transferred, four hydrogen ions are translocated across the cytoplasmic membrane), and thus conserves the redox energy in a proton gradient. The chain is NADH-quinone oxidoreductase subunit D from Ehrlichia ruminantium (strain Welgevonden).